A 427-amino-acid polypeptide reads, in one-letter code: 3-phosphoshikimate 1-carboxyvinyltransferase (427 aa).

3 residues coordinate 3-phosphoshikimate: Lys-22, Ser-23, and Arg-27. A phosphoenolpyruvate-binding site is contributed by Lys-22. Gly-96 and Arg-124 together coordinate phosphoenolpyruvate. 7 residues coordinate 3-phosphoshikimate: Ser-169, Ser-170, Gln-171, Ser-197, Asp-313, Asn-336, and Lys-340. Gln-171 is a phosphoenolpyruvate binding site. Asp-313 (proton acceptor) is an active-site residue. Phosphoenolpyruvate contacts are provided by Arg-344, Arg-386, and Lys-411.

It belongs to the EPSP synthase family. Monomer.

It is found in the cytoplasm. It carries out the reaction 3-phosphoshikimate + phosphoenolpyruvate = 5-O-(1-carboxyvinyl)-3-phosphoshikimate + phosphate. The protein operates within metabolic intermediate biosynthesis; chorismate biosynthesis; chorismate from D-erythrose 4-phosphate and phosphoenolpyruvate: step 6/7. Its function is as follows. Catalyzes the transfer of the enolpyruvyl moiety of phosphoenolpyruvate (PEP) to the 5-hydroxyl of shikimate-3-phosphate (S3P) to produce enolpyruvyl shikimate-3-phosphate and inorganic phosphate. The polypeptide is 3-phosphoshikimate 1-carboxyvinyltransferase (Escherichia coli O8 (strain IAI1)).